The chain runs to 548 residues: Chaperonin GroEL (548 aa).

Residues 29–32 (TMGP), K50, 86–90 (DGTTT), G414, 478–480 (NAA), and D494 contribute to the ATP site.

The protein belongs to the chaperonin (HSP60) family. As to quaternary structure, forms a cylinder of 14 subunits composed of two heptameric rings stacked back-to-back. Interacts with the co-chaperonin GroES.

It is found in the cytoplasm. It carries out the reaction ATP + H2O + a folded polypeptide = ADP + phosphate + an unfolded polypeptide.. Functionally, together with its co-chaperonin GroES, plays an essential role in assisting protein folding. The GroEL-GroES system forms a nano-cage that allows encapsulation of the non-native substrate proteins and provides a physical environment optimized to promote and accelerate protein folding. The chain is Chaperonin GroEL from Legionella pneumophila (strain Corby).